The chain runs to 360 residues: DNA polymerase IV (360 aa).

The UmuC domain occupies 9–191 (IMHLDIDAFY…LNINKIPYIG (183 aa)). Positions 13 and 108 each coordinate Mg(2+). Glutamate 109 is a catalytic residue.

Belongs to the DNA polymerase type-Y family. In terms of assembly, monomer. Mg(2+) serves as cofactor.

It is found in the cytoplasm. The catalysed reaction is DNA(n) + a 2'-deoxyribonucleoside 5'-triphosphate = DNA(n+1) + diphosphate. Its function is as follows. Poorly processive, error-prone DNA polymerase involved in untargeted mutagenesis. Copies undamaged DNA at stalled replication forks, which arise in vivo from mismatched or misaligned primer ends. These misaligned primers can be extended by PolIV. Exhibits no 3'-5' exonuclease (proofreading) activity. May be involved in translesional synthesis, in conjunction with the beta clamp from PolIII. The sequence is that of DNA polymerase IV from Ureaplasma parvum serovar 3 (strain ATCC 27815 / 27 / NCTC 11736).